The primary structure comprises 426 residues: Homeobox protein knotted-1-like LET12 (426 aa).

3 disordered regions span residues 1 to 26, 85 to 158, and 270 to 290; these read MEFQ…QQNA, QTSN…ENSW, and GVAP…DQAD. The span at 15-24 shows a compositional bias: low complexity; that stretch reads QQQQQQQQQQ. The segment covering 104-114 has biased composition (gly residues); it reads AGGGSNGGGSG. Low complexity predominate over residues 139–151; the sequence is ENNNNNNNNNNNN. The ELK domain occupies 327 to 347; that stretch reads ELKHELKQGYKEKIVDIREEI. A DNA-binding region (homeobox; TALE-type) is located at residues 348 to 411; it reads LRKRRAGKLP…NQRKRNWHSN (64 aa). The segment at 406–426 is disordered; it reads RNWHSNPSTSSSQKSQTQECR. Positions 413–426 are enriched in low complexity; the sequence is STSSSQKSQTQECR.

It belongs to the TALE/KNOX homeobox family. As to expression, ubiquitously expressed in the mature plant.

It localises to the nucleus. In terms of biological role, may have a role to play in formative events in ovule and embryo morphogenesis. In Solanum lycopersicum (Tomato), this protein is Homeobox protein knotted-1-like LET12 (LET12).